Consider the following 292-residue polypeptide: Ribosomal protein L11 methyltransferase (292 aa).

S-adenosyl-L-methionine contacts are provided by Thr144, Gly165, Asp187, and Asn229.

Belongs to the methyltransferase superfamily. PrmA family.

The protein localises to the cytoplasm. The enzyme catalyses L-lysyl-[protein] + 3 S-adenosyl-L-methionine = N(6),N(6),N(6)-trimethyl-L-lysyl-[protein] + 3 S-adenosyl-L-homocysteine + 3 H(+). Functionally, methylates ribosomal protein L11. This is Ribosomal protein L11 methyltransferase from Pseudomonas putida (strain ATCC 47054 / DSM 6125 / CFBP 8728 / NCIMB 11950 / KT2440).